A 685-amino-acid chain; its full sequence is MIDRYKHQQLRIGLVSPQQISAWANKILPNGEIVGEVTKPYTFHYKTNKPERDGLFCERIFGPIKSGICACGNYRVIGDEKEDPKFCEQCGVEFVDSRIRRYQMGYIKLACPVTHVWYLKRIPSYIANLLDKPLKELEGLVYCDFSFARPVAKKPTFLRLRGSFEYEIQSRKYSIPLFFTTQGFDTFRNREISTGAGAIREQLADPDLRIITDYSLGEWKELGEEGPTGNEWEDRKIGRRKDFLVRRMELAKHFIRTKVEPERMVLCLLPVLPPELRPIIQIDGGKSMSSDINELYRRVIYRNNTLIDLLTTSRSTPRELVMCQEKLVQEAVDTLLDNGIRGQPMRDGHNKVYKSFSDVIEGKEGRFRETLLGKRVDYSGRSVIVVGPSLSLHRCGLPREIAIELFQTFVIRGLIRQHVASNIGVAKSKIREKEPIVWEILQEVMQGHPVLLNRAPTLHRLGIQAFQPILVEGRAICLHPLVCKGFNADFDGDQMAVHVPLSLEAQAEARLLMFSHMNLLSPAIGDPISVPTQDMLIGLYVLTSGNRRGICANRYNPCNRGNRVNFQNERIDDNNYKYTKEKDPYFCSSYDAIGAYRQKRINLDSPLWLRWRLDQRIIASREVPIEVHYESLGTYHEIYVNYLIVKSVKKEILCIYIRTTVGHIYFYRKIEEAVQGFFRACSYGT.

Zn(2+) contacts are provided by cysteine 69, cysteine 71, cysteine 87, and cysteine 90. Residues aspartate 489, aspartate 491, and aspartate 493 each coordinate Mg(2+).

Belongs to the RNA polymerase beta' chain family. RpoC1 subfamily. In terms of assembly, in plastids the minimal PEP RNA polymerase catalytic core is composed of four subunits: alpha, beta, beta', and beta''. When a (nuclear-encoded) sigma factor is associated with the core the holoenzyme is formed, which can initiate transcription. Requires Mg(2+) as cofactor. Zn(2+) is required as a cofactor.

Its subcellular location is the plastid. It is found in the chloroplast. It carries out the reaction RNA(n) + a ribonucleoside 5'-triphosphate = RNA(n+1) + diphosphate. DNA-dependent RNA polymerase catalyzes the transcription of DNA into RNA using the four ribonucleoside triphosphates as substrates. The chain is DNA-directed RNA polymerase subunit beta' from Buxus microphylla (Littleleaf boxwood).